The following is a 232-amino-acid chain: MGKLTKNQKLAAEKIEAGKAYSLKEAASLVKEITFTKFDASLDIDVRLGVDPRKANQMVRGVVSLPHGTGKEVRVLVLCTPDAEAAAKEAGADYVGLDEYIEKIKGGWTDIDVIITMPSIMGKIGALGRVLGPRGLMPNPKSGTVTMDVAKAVKEVKQGKIDFKVDKSGIVHTSIGKVSFSPDQIRDNAKEFISTLNKLKPTAAKGTYIKSIYLSSTMSAGIKIDPKSVDEI.

This sequence belongs to the universal ribosomal protein uL1 family. As to quaternary structure, part of the 50S ribosomal subunit.

In terms of biological role, binds directly to 23S rRNA. The L1 stalk is quite mobile in the ribosome, and is involved in E site tRNA release. Protein L1 is also a translational repressor protein, it controls the translation of the L11 operon by binding to its mRNA. This Bacteroides thetaiotaomicron (strain ATCC 29148 / DSM 2079 / JCM 5827 / CCUG 10774 / NCTC 10582 / VPI-5482 / E50) protein is Large ribosomal subunit protein uL1.